Consider the following 278-residue polypeptide: Hydroxyethylthiazole kinase (278 aa).

M48 is a substrate binding site. The ATP site is built by R124 and T175. G202 is a binding site for substrate.

This sequence belongs to the Thz kinase family. Requires Mg(2+) as cofactor.

It catalyses the reaction 5-(2-hydroxyethyl)-4-methylthiazole + ATP = 4-methyl-5-(2-phosphooxyethyl)-thiazole + ADP + H(+). It participates in cofactor biosynthesis; thiamine diphosphate biosynthesis; 4-methyl-5-(2-phosphoethyl)-thiazole from 5-(2-hydroxyethyl)-4-methylthiazole: step 1/1. Catalyzes the phosphorylation of the hydroxyl group of 4-methyl-5-beta-hydroxyethylthiazole (THZ). The protein is Hydroxyethylthiazole kinase of Clostridium botulinum (strain Alaska E43 / Type E3).